We begin with the raw amino-acid sequence, 361 residues long: Serpentine receptor class X 45 (361 aa).

Helical transmembrane passes span Leu20–Ile40, Ala58–Phe78, Phe92–Leu112, Thr133–Ile153, Met176–Ile196, Leu242–Leu262, and Leu278–Phe298. N-linked (GlcNAc...) asparagine glycosylation occurs at Asn317.

This sequence belongs to the G-protein coupled receptor 1 family.

The protein localises to the cell membrane. This is Serpentine receptor class X 45 (srx-45) from Caenorhabditis elegans.